Consider the following 277-residue polypeptide: Phosphate import ATP-binding protein PstB 2 (277 aa).

Positions 31–272 constitute an ABC transporter domain; that stretch reads IEVPGLNLFY…PAKKQTEDYI (242 aa). 63–70 serves as a coordination point for ATP; sequence GPSGCGKS.

This sequence belongs to the ABC transporter superfamily. Phosphate importer (TC 3.A.1.7) family. The complex is composed of two ATP-binding proteins (PstB), two transmembrane proteins (PstC and PstA) and a solute-binding protein (PstS).

The protein resides in the cell inner membrane. It catalyses the reaction phosphate(out) + ATP + H2O = ADP + 2 phosphate(in) + H(+). Part of the ABC transporter complex PstSACB involved in phosphate import. Responsible for energy coupling to the transport system. The polypeptide is Phosphate import ATP-binding protein PstB 2 (Pseudomonas savastanoi pv. phaseolicola (strain 1448A / Race 6) (Pseudomonas syringae pv. phaseolicola (strain 1448A / Race 6))).